Here is a 143-residue protein sequence, read N- to C-terminus: Ribosome-binding factor A (143 aa).

The segment at 117 to 143 is disordered; that stretch reads DAEIARRSQGAMPAGEADPYRHSDEEE. The segment covering 134–143 has biased composition (basic and acidic residues); sequence DPYRHSDEEE.

The protein belongs to the RbfA family. In terms of assembly, monomer. Binds 30S ribosomal subunits, but not 50S ribosomal subunits or 70S ribosomes.

The protein localises to the cytoplasm. One of several proteins that assist in the late maturation steps of the functional core of the 30S ribosomal subunit. Associates with free 30S ribosomal subunits (but not with 30S subunits that are part of 70S ribosomes or polysomes). Required for efficient processing of 16S rRNA. May interact with the 5'-terminal helix region of 16S rRNA. This chain is Ribosome-binding factor A, found in Cutibacterium acnes (strain DSM 16379 / KPA171202) (Propionibacterium acnes).